The chain runs to 142 residues: Large ribosomal subunit protein uL13 (142 aa).

Belongs to the universal ribosomal protein uL13 family. In terms of assembly, part of the 50S ribosomal subunit.

In terms of biological role, this protein is one of the early assembly proteins of the 50S ribosomal subunit, although it is not seen to bind rRNA by itself. It is important during the early stages of 50S assembly. The protein is Large ribosomal subunit protein uL13 of Bordetella bronchiseptica (strain ATCC BAA-588 / NCTC 13252 / RB50) (Alcaligenes bronchisepticus).